The following is a 561-amino-acid chain: Delta(24)-sterol reductase (561 aa).

Over 1-25 the chain is Lumenal; that stretch reads MSDLQTPLVRPKRKKTWVDYFVKFR. Residue S2 is modified to Phosphoserine. A helical; Signal-anchor membrane pass occupies residues 26-46; that stretch reads WIIVIFIVLPFSATFYFLIYL. The Cytoplasmic segment spans residues 47-561; the sequence is GDMWSESKSF…HLETAYAEAD (515 aa). In terms of domain architecture, FAD-binding PCMH-type spans 49 to 232; the sequence is MWSESKSFEK…VAAEIRLIKV (184 aa). The tract at residues 518 to 539 is interaction with calmodulin; that stretch reads CRKKYRAIGTFMSVYYKSKKGR.

The protein belongs to the DIMINUTO family. In terms of assembly, interacts with calmodulin.

It is found in the microsome membrane. The catalysed reaction is lathosterol + NADP(+) = 5alpha-cholesta-7,24-dien-3beta-ol + NADPH + H(+). Plays a critical role in the general process of plant cell elongation. Involved in the synthesis of campesterol, an early precursor of brassinolide. Required for the conversion of 24-methylenecholesterol to campesterol and for the conversion of isofucosterol to sitosterol. Necessary for both the isomerization and reduction of 24-methylenecholesterol. Regulates indirectly phytochrome-mediated light responses through the modulation of brassinosteroid biosynthesis. The chain is Delta(24)-sterol reductase (DIM) from Arabidopsis thaliana (Mouse-ear cress).